A 151-amino-acid polypeptide reads, in one-letter code: Ribosome maturation factor RimP (151 aa).

It belongs to the RimP family.

It localises to the cytoplasm. Required for maturation of 30S ribosomal subunits. The polypeptide is Ribosome maturation factor RimP (Halorhodospira halophila (strain DSM 244 / SL1) (Ectothiorhodospira halophila (strain DSM 244 / SL1))).